A 186-amino-acid chain; its full sequence is Akirin-1 (186 aa).

Positions 1 to 64 (MACGATLKRS…PLPQLGGDRR (64 aa)) are disordered. The Nuclear localization signal signature appears at 22 to 27 (PKRRRC). Positions 49 to 60 (QQGQQQPLPQLG) are enriched in low complexity. Residues 183–186 (SYVS) carry the SYVS motif motif.

Belongs to the akirin family.

Its subcellular location is the nucleus. In terms of biological role, molecular adapter that acts as a bridge between proteins, and which is involved skeletal muscle development. Functions as a signal transducer for MSTN during skeletal muscle regeneration and myogenesis. This chain is Akirin-1, found in Xenopus tropicalis (Western clawed frog).